The primary structure comprises 351 residues: ATP-dependent protease ATP-binding subunit-like protein (351 aa).

Positions 1-26 (MPYITDMLRDRNSAATPPAEERSEPV) are disordered. ATP is bound at residue 79–86 (GPTGVGKT).

Belongs to the ClpA/ClpB family.

This Rhodococcus erythropolis (Arthrobacter picolinophilus) protein is ATP-dependent protease ATP-binding subunit-like protein.